The primary structure comprises 124 residues: uncharacterized protein (124 aa).

3 consecutive transmembrane segments (helical) span residues 13–33 (LIQI…VLQL), 43–63 (GLFW…PEFF), and 71–91 (GVGR…FYLI).

This sequence to M.thermoautotrophicum MTH137.

It is found in the cell membrane. This is an uncharacterized protein from Methanocaldococcus jannaschii (strain ATCC 43067 / DSM 2661 / JAL-1 / JCM 10045 / NBRC 100440) (Methanococcus jannaschii).